A 230-amino-acid polypeptide reads, in one-letter code: Tail fiber protein p36 (230 aa).

The distal half-fiber contains two molecules each of Gp36 and Gp37 and one molecule of Gp35.

The protein localises to the virion. Functionally, structural component of the distal-half tail fiber. The polypeptide is Tail fiber protein p36 (36) (Enterobacteria phage K3 (Bacteriophage K3)).